The primary structure comprises 192 residues: PBAN-type neuropeptides (192 aa).

An N-terminal signal peptide occupies residues Met1–Cys23. A Leucine amide modification is found at Leu47. Positions Ser51–Thr94 are excised as a propeptide. Leucine amide is present on residues Leu103, Leu122, Leu158, and Leu168. Positions Glu171 to Asn192 are excised as a propeptide.

Belongs to the pyrokinin family. Expression is restricted to the subesophageal ganglion.

The protein resides in the secreted. Functionally, a hormone that controls sex pheromone production in females and pheromone responsiveness in male. Also mediates visceral muscle contractile activity (myotropic activity). Identical to MRCH which is implicated in the formation of both melanin in the cuticle and ommochrome in the epidermis of armyworm species. Diapause hormone (DH) is responsible for induction of embryonic diapause. Its function is as follows. The three SGNPS are far less active than DH in inducing diapause eggs. Beta-SGNP expressed higher pban activity than PBAN-I, but alpha- and gamma-SGNP were far less active in pheromonotropic activity. This chain is PBAN-type neuropeptides, found in Bombyx mori (Silk moth).